The primary structure comprises 332 residues: Invasin IpaD (332 aa).

Residues 1–25 (MNITTLTNSISTSSFSPNNTNGSST) show a composition bias toward low complexity. Residues 1–43 (MNITTLTNSISTSSFSPNNTNGSSTETVNSDIKTTTSSHPVSS) form a disordered region. Residues 26 to 43 (ETVNSDIKTTTSSHPVSS) show a composition bias toward polar residues. A coiled-coil region spans residues 44–77 (LTMLNDTLHNIRTTNQALKKELSQKTLTKTSLEE). Positions 192-267 (VNSLKKALEE…KSLDNLGGNG (76 aa)) are ipaB binding.

Belongs to the invasin protein D family.

It localises to the secreted. Its function is as follows. Required for bacterial invasion of host cells. Controls IpaB and IpaC secretion, and the efficiency with which they are physically inserted into target cell membranes. These proteins are exported via T3SS to form a pore in the host membrane that allows the translocation of the other effectors into the host cytoplasm. Along with IpaB, is essential for both blocking secretion through the Mxi/Spa translocon in the absence of a secretion-inducing signal, and for controlling the level of secretion in the presence of this signal. This is Invasin IpaD (ipaD) from Shigella flexneri.